A 485-amino-acid chain; its full sequence is Apolipoprotein N-acyltransferase (485 aa).

Helical transmembrane passes span 8–28, 49–69, 76–96, 121–141, 157–177, and 186–206; these read IAGA…IAFV, GWLF…VSIH, VPLA…FIAF, WWVV…WLFL, FGIY…YLLV, and IMCL…TFIP. A CN hydrolase domain is found at 220–457; that stretch reads VQGNIGQRLK…RLLLTGQIKP (238 aa). The active-site Proton acceptor is Glu-259. Lys-317 is a catalytic residue. Cys-369 serves as the catalytic Nucleophile. A helical transmembrane segment spans residues 464-484; the sequence is LMRWNYYPVVGIIIIFLLLTF.

This sequence belongs to the CN hydrolase family. Apolipoprotein N-acyltransferase subfamily.

It is found in the cell inner membrane. It catalyses the reaction N-terminal S-1,2-diacyl-sn-glyceryl-L-cysteinyl-[lipoprotein] + a glycerophospholipid = N-acyl-S-1,2-diacyl-sn-glyceryl-L-cysteinyl-[lipoprotein] + a 2-acyl-sn-glycero-3-phospholipid + H(+). Its pathway is protein modification; lipoprotein biosynthesis (N-acyl transfer). Its function is as follows. Catalyzes the phospholipid dependent N-acylation of the N-terminal cysteine of apolipoprotein, the last step in lipoprotein maturation. The polypeptide is Apolipoprotein N-acyltransferase (Coxiella burnetii (strain RSA 493 / Nine Mile phase I)).